The following is a 477-amino-acid chain: Transmembrane and coiled-coil domain protein 3 (477 aa).

Ser-46 is modified (phosphoserine). Residues 112–153 (KQVFEKKNQKSAHSIAQLQKKLEQYHRKLREIEQNGASRSSK) are a coiled coil. 2 disordered regions span residues 168-188 (KDAH…KSGM) and 249-277 (PKYG…GAGG). Ser-253 bears the Phosphoserine mark. Positions 258-273 (SSGTSGSADSNGNQSF) are enriched in polar residues. Residues 282–398 (DSQGKLAVIL…KLELHQQEQQ (117 aa)) are a coiled coil. The next 2 membrane-spanning stretches (helical) occupy residues 417–437 (VILA…KFVS) and 450–470 (FFAV…LCAI).

Belongs to the TEX28 family. May form homodimers and heterodimers with TMCC2 or TMCC3 via the coiled-coil domains. Interacts with ribosomal proteins RPL4 and RPS6. As to expression, widely expressed, with highest levels in brain, spinal cord and testis.

Its subcellular location is the endoplasmic reticulum membrane. The chain is Transmembrane and coiled-coil domain protein 3 from Homo sapiens (Human).